Reading from the N-terminus, the 148-residue chain is Deoxyuridine 5'-triphosphate nucleotidohydrolase (148 aa).

Residues 67–69 (RSG), N80, 84–86 (LID), and M94 contribute to the substrate site.

The protein belongs to the dUTPase family. Mg(2+) serves as cofactor.

It carries out the reaction dUTP + H2O = dUMP + diphosphate + H(+). It functions in the pathway pyrimidine metabolism; dUMP biosynthesis; dUMP from dCTP (dUTP route): step 2/2. Its function is as follows. This enzyme is involved in nucleotide metabolism: it produces dUMP, the immediate precursor of thymidine nucleotides and it decreases the intracellular concentration of dUTP so that uracil cannot be incorporated into DNA. The polypeptide is Deoxyuridine 5'-triphosphate nucleotidohydrolase (Burkholderia ambifaria (strain ATCC BAA-244 / DSM 16087 / CCUG 44356 / LMG 19182 / AMMD) (Burkholderia cepacia (strain AMMD))).